Reading from the N-terminus, the 203-residue chain is dTTP/UTP pyrophosphatase (203 aa).

Asp74 acts as the Proton acceptor in catalysis.

This sequence belongs to the Maf family. YhdE subfamily. Requires a divalent metal cation as cofactor.

The protein localises to the cytoplasm. It catalyses the reaction dTTP + H2O = dTMP + diphosphate + H(+). The catalysed reaction is UTP + H2O = UMP + diphosphate + H(+). Functionally, nucleoside triphosphate pyrophosphatase that hydrolyzes dTTP and UTP. May have a dual role in cell division arrest and in preventing the incorporation of modified nucleotides into cellular nucleic acids. The sequence is that of dTTP/UTP pyrophosphatase from Treponema denticola (strain ATCC 35405 / DSM 14222 / CIP 103919 / JCM 8153 / KCTC 15104).